Consider the following 318-residue polypeptide: Mitochondrial thiamine pyrophosphate carrier (318 aa).

Solcar repeat units lie at residues 13-106 (ISNV…LTEL), 116-202 (RDFS…LKRA), and 214-309 (NGNF…FCNF). A helical membrane pass occupies residues 19–39 (AVAGSVSGLVTRVLISPLDVI). A Phosphoserine modification is found at S51. 4 helical membrane-spanning segments follow: residues 87-107 (LLSI…TELV), 122-142 (FLCG…VDVL), 173-193 (VFYK…GFQF), and 220-240 (LLCG…LDLF). The Substrate recognition motif lies at 241 to 246 (KKRLQV). Residues 293–313 (ALSTGLVFFWYELFCNFFHHM) form a helical membrane-spanning segment.

This sequence belongs to the mitochondrial carrier (TC 2.A.29) family.

It localises to the mitochondrion membrane. It catalyses the reaction thiamine phosphate(out) + thiamine diphosphate(in) = thiamine phosphate(in) + thiamine diphosphate(out). In terms of biological role, mitochondrial transporter mediating uptake of thiamine diphosphate into mitochondria. It is not clear if the antiporter activity is affected by the membrane potential or by the proton electrochemical gradient. The protein is Mitochondrial thiamine pyrophosphate carrier (SLC25A19) of Bos taurus (Bovine).